The chain runs to 75 residues: Large ribosomal subunit protein bL31 (75 aa).

Zn(2+)-binding residues include Cys-16, Cys-18, Cys-37, and Cys-40.

It belongs to the bacterial ribosomal protein bL31 family. Type A subfamily. As to quaternary structure, part of the 50S ribosomal subunit. Zn(2+) is required as a cofactor.

Its function is as follows. Binds the 23S rRNA. The protein is Large ribosomal subunit protein bL31 of Legionella pneumophila (strain Paris).